A 414-amino-acid chain; its full sequence is 2,3-bisphosphoglycerate-independent phosphoglycerate mutase (414 aa).

It belongs to the BPG-independent phosphoglycerate mutase family. A-PGAM subfamily.

It catalyses the reaction (2R)-2-phosphoglycerate = (2R)-3-phosphoglycerate. Its pathway is carbohydrate degradation; glycolysis; pyruvate from D-glyceraldehyde 3-phosphate: step 3/5. Functionally, catalyzes the interconversion of 2-phosphoglycerate and 3-phosphoglycerate. This chain is 2,3-bisphosphoglycerate-independent phosphoglycerate mutase, found in Saccharolobus islandicus (strain L.S.2.15 / Lassen #1) (Sulfolobus islandicus).